Reading from the N-terminus, the 65-residue chain is Large ribosomal subunit protein uL29c (65 aa).

This sequence belongs to the universal ribosomal protein uL29 family.

The protein localises to the plastid. It localises to the chloroplast. The sequence is that of Large ribosomal subunit protein uL29c (rpl29) from Guillardia theta (Cryptophyte).